The primary structure comprises 154 residues: Myoglobin (154 aa).

The 147-residue stretch at 2–148 folds into the Globin domain; sequence GLSDGEWQLV…FRNDIAAKYK (147 aa). Serine 4 carries the phosphoserine modification. Residue histidine 65 coordinates nitrite. Histidine 65 lines the O2 pocket. Threonine 68 carries the post-translational modification Phosphothreonine. Position 94 (histidine 94) interacts with heme b.

It belongs to the globin family. In terms of assembly, monomeric.

Its subcellular location is the cytoplasm. It is found in the sarcoplasm. The catalysed reaction is Fe(III)-heme b-[protein] + nitric oxide + H2O = Fe(II)-heme b-[protein] + nitrite + 2 H(+). The enzyme catalyses H2O2 + AH2 = A + 2 H2O. Its function is as follows. Monomeric heme protein which primary function is to store oxygen and facilitate its diffusion within muscle tissues. Reversibly binds oxygen through a pentacoordinated heme iron and enables its timely and efficient release as needed during periods of heightened demand. Depending on the oxidative conditions of tissues and cells, and in addition to its ability to bind oxygen, it also has a nitrite reductase activity whereby it regulates the production of bioactive nitric oxide. Under stress conditions, like hypoxia and anoxia, it also protects cells against reactive oxygen species thanks to its pseudoperoxidase activity. This is Myoglobin (MB) from Spalax ehrenbergi (Middle East blind mole rat).